Reading from the N-terminus, the 279-residue chain is Large ribosomal subunit protein uL2 (279 aa).

The disordered stretch occupies residues 223 to 279; sequence VAMNPVDHPMGGGEGRSSGGHPRSRKGLYAKGGKTRSANKYSKNMIVKKRVNKRLSK. Basic residues predominate over residues 268 to 279; sequence IVKKRVNKRLSK.

This sequence belongs to the universal ribosomal protein uL2 family. In terms of assembly, part of the 50S ribosomal subunit. Forms a bridge to the 30S subunit in the 70S ribosome.

One of the primary rRNA binding proteins. Required for association of the 30S and 50S subunits to form the 70S ribosome, for tRNA binding and peptide bond formation. It has been suggested to have peptidyltransferase activity; this is somewhat controversial. Makes several contacts with the 16S rRNA in the 70S ribosome. The chain is Large ribosomal subunit protein uL2 from Cytophaga hutchinsonii (strain ATCC 33406 / DSM 1761 / CIP 103989 / NBRC 15051 / NCIMB 9469 / D465).